Consider the following 2475-residue polypeptide: Non-reducing polyketide synthase ausA (2475 aa).

The interval 14–253 is N-terminal acylcarrier protein transacylase domain (SAT); it reads VLFGSKYSEI…HHADHLSAAQ (240 aa). The Ketosynthase family 3 (KS3) domain occupies 384-800; sequence SIPIAVTGLA…GSNAAIVLKE (417 aa). Active-site for beta-ketoacyl synthase activity residues include Cys549, His684, and His723. Residues 910–1212 are malonyl-CoA:ACP transacylase (MAT) domain; the sequence is LCFGGQTGNK…CPMDLSGPQA (303 aa). The For acyl/malonyl transferase activity role is filled by Ser997. Residues 1279-1407 are N-terminal hotdog fold; sequence EDLKLVQLLK…GTISLSPGAD (129 aa). One can recognise a PKS/mFAS DH domain in the interval 1279–1586; sequence EDLKLVQLLK…FTSVSIQSLR (308 aa). The segment at 1282-1585 is product template (PT) domain; it reads KLVQLLKNEG…TFTSVSIQSL (304 aa). The active-site Proton acceptor; for dehydratase activity is His1312. The interval 1435 to 1586 is C-terminal hotdog fold; it reads SSSGLKRSTV…FTSVSIQSLR (152 aa). The active-site Proton donor; for dehydratase activity is the Asp1493. The region spanning 1626–1703 is the Carrier domain; it reads SSNGDDLRTV…ALVQRIFPGR (78 aa). An O-(pantetheine 4'-phosphoryl)serine modification is found at Ser1663. The segment at 1865–2098 is methyltransferase (CMeT) domain; the sequence is QHTSEHKLLH…GFNWVDWTDN (234 aa). The thioesterase (TE) domain stretch occupies residues 2127-2475; that stretch reads SAIHEETVVY…YEFLRSHVGL (349 aa). Residues Ser2250, Asp2412, and His2444 each act as for thioesterase activity in the active site.

The enzyme catalyses 3 malonyl-CoA + acetyl-CoA + 2 S-adenosyl-L-methionine = 3,5-dimethylorsellinate + 2 S-adenosyl-L-homocysteine + 3 CO2 + 4 CoA. It participates in secondary metabolite biosynthesis; terpenoid biosynthesis. Functionally, non-reducing polyketide synthase; part of the gene cluster A that mediates the biosynthesis of the fungal meroterpenoid acetoxydehydroaustin. The first step of the pathway is the synthesis of 3,5-dimethylorsellinic acid by the polyketide synthase ausA. 3,5-dimethylorsellinic acid is then prenylated by the polyprenyl transferase ausN. Further epoxidation by the FAD-dependent monooxygenase ausM and cyclization by the probable terpene cyclase ausL lead to the formation of protoaustinoid A. Protoaustinoid A is then oxidized to spiro-lactone preaustinoid A3 by the combined action of the FAD-binding monooxygenases ausB and ausC, and the dioxygenase ausE. Acid-catalyzed keto-rearrangement and ring contraction of the tetraketide portion of preaustinoid A3 by ausJ lead to the formation of preaustinoid A4. The aldo-keto reductase ausK, with the help of ausH, is involved in the next step by transforming preaustinoid A4 into isoaustinone which is in turn hydroxylated by the P450 monooxygenase ausI to form austinolide. The cytochrome P450 monooxygenase ausG then modifies austinolide to austinol. Austinol is further acetylated to austin by the O-acetyltransferase ausP, which spontaneously changes to dehydroaustin. The cytochrome P450 monooxygenase then converts dehydroaustin is into 7-dehydrodehydroaustin. The hydroxylation catalyzed by ausR permits the second O-acetyltransferase ausQ to add an additional acetyl group to the molecule, leading to the formation of acetoxydehydroaustin. Due to genetic rearrangements of the clusters and the subsequent loss of some enzymes, the end product of the Penicillium brasilianum austinoid biosynthesis clusters is acetoxydehydroaustin. The polypeptide is Non-reducing polyketide synthase ausA (Penicillium brasilianum).